Reading from the N-terminus, the 161-residue chain is ATP synthase subunit b 1 (161 aa).

Residues 5–25 (PETWVAIAFLLLMGVFAYVGV) traverse the membrane as a helical segment.

Belongs to the ATPase B chain family. F-type ATPases have 2 components, F(1) - the catalytic core - and F(0) - the membrane proton channel. F(1) has five subunits: alpha(3), beta(3), gamma(1), delta(1), epsilon(1). F(0) has three main subunits: a(1), b(2) and c(10-14). The alpha and beta chains form an alternating ring which encloses part of the gamma chain. F(1) is attached to F(0) by a central stalk formed by the gamma and epsilon chains, while a peripheral stalk is formed by the delta and b chains.

It is found in the cell inner membrane. In terms of biological role, f(1)F(0) ATP synthase produces ATP from ADP in the presence of a proton or sodium gradient. F-type ATPases consist of two structural domains, F(1) containing the extramembraneous catalytic core and F(0) containing the membrane proton channel, linked together by a central stalk and a peripheral stalk. During catalysis, ATP synthesis in the catalytic domain of F(1) is coupled via a rotary mechanism of the central stalk subunits to proton translocation. Component of the F(0) channel, it forms part of the peripheral stalk, linking F(1) to F(0). The sequence is that of ATP synthase subunit b 1 from Nitrobacter winogradskyi (strain ATCC 25391 / DSM 10237 / CIP 104748 / NCIMB 11846 / Nb-255).